The following is a 206-amino-acid chain: High frequency lysogenization protein HflD homolog (206 aa).

It belongs to the HflD family.

The protein localises to the cytoplasm. The protein resides in the cell inner membrane. The protein is High frequency lysogenization protein HflD homolog of Pseudomonas syringae pv. tomato (strain ATCC BAA-871 / DC3000).